The chain runs to 581 residues: MKLLFFLFGLIFAVEQEKPYLDNNRVPVEQILNDHSSAKFDYTYVSVCVNSTDETLLDIVYAKECKNAASRVALGKYSNQVNTTGWGILEIETFASHSYDVQAYGAGVAEGELTRLQIYYHYRNTIETMCNNHTLFCKRLYIYLQQNLDWMRSQVQANPPTDPFWRQVNLTFAQLTGIYDAYSKRNLTPEIGFDLHPIYMMQLAGDMFDLNKLLNKTADPMEYPEGGRCSGFVKLAPGNKDMFMAHVSMSSLSWMQRVLKIYKFGYDVNEVPGHIVTFSGYPGVLISTDDYTITSAGLTSIETTIAIFNQTLYTDKFMKPEGQVHCWIRSMISNLLSRTGKQWVDMFGRYNSGTYNNQWTVLDWKQFTPEKELPDKDVLWISEQTPGYYETRDMTWYLKKYTYFASYNIPFLPKVSEISGFDNKARQFAWFDWGGSPRARIFDRDHSKVTDIDSLTKLMRYNDYTHEEFARCKCTPNPYTGEGGISARGDLNTPGGTYEVESMGFRDHAGLDFKGTNYEMFKKMRFRAWGGPPYDPLPVFDWNHTNLTNVRHFGQPDVWNFTYVDLEWQLAAQVQLTPYDN.

Positions 1–16 (MKLLFFLFGLIFAVEQ) are cleaved as a signal peptide. Residues asparagine 50, asparagine 82, asparagine 132, asparagine 169, asparagine 215, asparagine 309, asparagine 543, asparagine 546, and asparagine 560 are each glycosylated (N-linked (GlcNAc...) asparagine).

Belongs to the phospholipase B-like family.

The protein localises to the secreted. In terms of biological role, putative phospholipase. This is Putative phospholipase B-like 3 from Caenorhabditis elegans.